Here is a 272-residue protein sequence, read N- to C-terminus: ATP phosphoribosyltransferase regulatory subunit (272 aa).

It belongs to the class-II aminoacyl-tRNA synthetase family. HisZ subfamily. Heteromultimer composed of HisG and HisZ subunits.

It is found in the cytoplasm. It functions in the pathway amino-acid biosynthesis; L-histidine biosynthesis; L-histidine from 5-phospho-alpha-D-ribose 1-diphosphate: step 1/9. Required for the first step of histidine biosynthesis. May allow the feedback regulation of ATP phosphoribosyltransferase activity by histidine. The protein is ATP phosphoribosyltransferase regulatory subunit of Staphylococcus aureus (strain USA300).